Reading from the N-terminus, the 648-residue chain is Nucleoside triphosphatase I (648 aa).

The region spanning 48-212 (FIGLKNLNSM…NNLIGLLRPN (165 aa)) is the Helicase ATP-binding domain. 61-68 (WDTGMGKT) provides a ligand contact to ATP. The short motif at 150–153 (DEVH) is the DEXH box element. The Helicase C-terminal domain maps to 378-541 (YIETCKIILN…KINVIFDLLK (164 aa)). The interval 467–533 (DIIILDMPWN…DIIKDKQGKI (67 aa)) is binding to the cap-specific mRNA (nucleoside-2'-O-)-methyltransferase.

The protein belongs to the helicase family. NPH I subfamily. Monomer. Interacts (via C-terminus) with RAP94 (via N-terminus). Interacts with the cap-specific mRNA (nucleoside-2'-O-)-methyltransferase.

Its subcellular location is the virion. It catalyses the reaction a ribonucleoside 5'-triphosphate + H2O = a ribonucleoside 5'-diphosphate + phosphate + H(+). Functionally, DNA-dependent ATPase required for providing the needed energy to achieve the termination of early transcripts. Acts in concert with the RAP94 subunit of the virion RNA polymerase and the capping enzyme/VTF to catalyze release of UUUUUNU-containing nascent RNA from the elongation complex. NPH-I must bind ssDNA in order to exhibit ATPase activity. In Amsacta (AmEPV), this protein is Nucleoside triphosphatase I (NPH1).